The sequence spans 141 residues: Protein NrdI (141 aa).

The protein belongs to the NrdI family.

Its function is as follows. Probably involved in ribonucleotide reductase function. This Bifidobacterium animalis subsp. lactis (strain AD011) protein is Protein NrdI.